We begin with the raw amino-acid sequence, 210 residues long: UPF0301 protein CPS_1252 (210 aa).

It belongs to the UPF0301 (AlgH) family.

The polypeptide is UPF0301 protein CPS_1252 (Colwellia psychrerythraea (strain 34H / ATCC BAA-681) (Vibrio psychroerythus)).